The following is a 290-amino-acid chain: Pyridoxal kinase PdxY (290 aa).

Substrate is bound by residues serine 12 and 47-48; that span reads TQ. ATP-binding positions include aspartate 114, glutamate 151, lysine 184, and 211-214; that span reads RPLL. Residue aspartate 225 coordinates substrate.

The protein belongs to the pyridoxine kinase family. PdxY subfamily. As to quaternary structure, homodimer. It depends on Mg(2+) as a cofactor.

The catalysed reaction is pyridoxal + ATP = pyridoxal 5'-phosphate + ADP + H(+). It functions in the pathway cofactor metabolism; pyridoxal 5'-phosphate salvage; pyridoxal 5'-phosphate from pyridoxal: step 1/1. Its function is as follows. Pyridoxal kinase involved in the salvage pathway of pyridoxal 5'-phosphate (PLP). Catalyzes the phosphorylation of pyridoxal to PLP. In Pseudomonas putida (strain ATCC 700007 / DSM 6899 / JCM 31910 / BCRC 17059 / LMG 24140 / F1), this protein is Pyridoxal kinase PdxY.